A 204-amino-acid chain; its full sequence is Holliday junction branch migration complex subunit RuvA (204 aa).

The tract at residues 1–64 is domain I; the sequence is MFAFLRGELV…EDLQQLFGFL (64 aa). Residues 65-143 form a domain II region; it reads DEEELQLFRL…KIQPTSSAKA (79 aa). The tract at residues 144–151 is flexible linker; the sequence is GAPSAVLS. The segment at 151–204 is domain III; sequence SATQLIDDAVAALTTLGFPKASAQKAVSKVLETTPGLSVEELVRTSLAAMHNNL.

It belongs to the RuvA family. Homotetramer. Forms an RuvA(8)-RuvB(12)-Holliday junction (HJ) complex. HJ DNA is sandwiched between 2 RuvA tetramers; dsDNA enters through RuvA and exits via RuvB. An RuvB hexamer assembles on each DNA strand where it exits the tetramer. Each RuvB hexamer is contacted by two RuvA subunits (via domain III) on 2 adjacent RuvB subunits; this complex drives branch migration. In the full resolvosome a probable DNA-RuvA(4)-RuvB(12)-RuvC(2) complex forms which resolves the HJ.

It localises to the cytoplasm. The RuvA-RuvB-RuvC complex processes Holliday junction (HJ) DNA during genetic recombination and DNA repair, while the RuvA-RuvB complex plays an important role in the rescue of blocked DNA replication forks via replication fork reversal (RFR). RuvA specifically binds to HJ cruciform DNA, conferring on it an open structure. The RuvB hexamer acts as an ATP-dependent pump, pulling dsDNA into and through the RuvAB complex. HJ branch migration allows RuvC to scan DNA until it finds its consensus sequence, where it cleaves and resolves the cruciform DNA. The sequence is that of Holliday junction branch migration complex subunit RuvA from Chlorobaculum parvum (strain DSM 263 / NCIMB 8327) (Chlorobium vibrioforme subsp. thiosulfatophilum).